The sequence spans 360 residues: Probable neutral protease 2 homolog MCYG_04257 (360 aa).

The first 17 residues, 1-17 (MQLIAFLAALGVPVAFA), serve as a signal peptide directing secretion. Residues 18-182 (ATIPSVPLNH…KVKAGSIDKR (165 aa)) constitute a propeptide that is removed on maturation. Residues cysteine 190 and cysteine 261 are joined by a disulfide bond. An N-linked (GlcNAc...) asparagine glycan is attached at asparagine 262. 2 disulfides stabilise this stretch: cysteine 268–cysteine 286 and cysteine 300–cysteine 360. Histidine 311 serves as a coordination point for Zn(2+). Glutamate 312 is a catalytic residue. Zn(2+) contacts are provided by histidine 315 and aspartate 326.

It belongs to the peptidase M35 family. The cofactor is Zn(2+).

The protein localises to the secreted. It carries out the reaction Preferential cleavage of bonds with hydrophobic residues in P1'. Also 3-Asn-|-Gln-4 and 8-Gly-|-Ser-9 bonds in insulin B chain.. Functionally, probable secreted metalloprotease that shows high activities on basic nuclear substrates such as histone and protamine. May be involved in virulence. The polypeptide is Probable neutral protease 2 homolog MCYG_04257 (Arthroderma otae (strain ATCC MYA-4605 / CBS 113480) (Microsporum canis)).